A 743-amino-acid polypeptide reads, in one-letter code: Catalase-peroxidase (743 aa).

Positions 1–15 are enriched in polar residues; the sequence is MSSDSRPPQPDTSTQ. The tract at residues 1–40 is disordered; sequence MSSDSRPPQPDTSTQSNSESESPAISSPTPQDHAPMTNRD. Low complexity predominate over residues 16-28; the sequence is SNSESESPAISSP. Positions 110-233 form a cross-link, tryptophyl-tyrosyl-methioninium (Trp-Tyr) (with M-259); that stretch reads WHAAGTYRIQ…YGATTMGLIY (124 aa). His111 serves as the catalytic Proton acceptor. Residues 233–259 constitute a cross-link (tryptophyl-tyrosyl-methioninium (Tyr-Met) (with W-110)); it reads YVNPEGPEGKPDPVAAAHDIRETFARM. A heme b-binding site is contributed by His274. Positions 490–511 are disordered; the sequence is DKRGGANGGRLRLEPQKSWESN.

The protein belongs to the peroxidase family. Peroxidase/catalase subfamily. As to quaternary structure, homodimer or homotetramer. The cofactor is heme b. Formation of the three residue Trp-Tyr-Met cross-link is important for the catalase, but not the peroxidase activity of the enzyme.

It catalyses the reaction H2O2 + AH2 = A + 2 H2O. It carries out the reaction 2 H2O2 = O2 + 2 H2O. In terms of biological role, bifunctional enzyme with both catalase and broad-spectrum peroxidase activity. The polypeptide is Catalase-peroxidase (Mycobacterium marinum (strain ATCC BAA-535 / M)).